We begin with the raw amino-acid sequence, 332 residues long: MAQTWKDTDISLDPIKDQTIAVIGYGIQGDAQANNMKDSGLNVIIGLKEGGNSWKKAEADGHKVMSVADATKQADIIHILIPDMIQGQVYKDEIGPNLSEGKALSFSHAAAIYWKWIEAPNNVDLIMIAPKGPGSKVRETYLDNFGTPAIVAVEQDFTGKAWDRTLGIAKAIGSARAGLIKTAFKEEVETDWFGEQADLCGGAASMVTNAFETLVEAGYQPEIAYFEVLHELKLIVDMIQRYGINGMWRRVSETARYGGLTRGPMVMDSANKENMKKVLTMIQDGTFNNEWISEYQKNGKDAFDKYMKQYDEHQIEKVGKEMRKMMWPDSTE.

The region spanning Met1–Thr182 is the KARI N-terminal Rossmann domain. NADP(+) is bound by residues Tyr25 to Gln28, Lys48, Ser53, and Asp83 to Gln86. His108 is an active-site residue. Gly134 contacts NADP(+). The 147-residue stretch at Ala183 to Asp329 folds into the KARI C-terminal knotted domain. Asp191, Glu195, Glu227, and Glu231 together coordinate Mg(2+). Ser252 is a binding site for substrate.

It belongs to the ketol-acid reductoisomerase family. Requires Mg(2+) as cofactor.

The enzyme catalyses (2R)-2,3-dihydroxy-3-methylbutanoate + NADP(+) = (2S)-2-acetolactate + NADPH + H(+). It carries out the reaction (2R,3R)-2,3-dihydroxy-3-methylpentanoate + NADP(+) = (S)-2-ethyl-2-hydroxy-3-oxobutanoate + NADPH + H(+). It functions in the pathway amino-acid biosynthesis; L-isoleucine biosynthesis; L-isoleucine from 2-oxobutanoate: step 2/4. The protein operates within amino-acid biosynthesis; L-valine biosynthesis; L-valine from pyruvate: step 2/4. Involved in the biosynthesis of branched-chain amino acids (BCAA). Catalyzes an alkyl-migration followed by a ketol-acid reduction of (S)-2-acetolactate (S2AL) to yield (R)-2,3-dihydroxy-isovalerate. In the isomerase reaction, S2AL is rearranged via a Mg-dependent methyl migration to produce 3-hydroxy-3-methyl-2-ketobutyrate (HMKB). In the reductase reaction, this 2-ketoacid undergoes a metal-dependent reduction by NADPH to yield (R)-2,3-dihydroxy-isovalerate. In Nitrosopumilus maritimus (strain SCM1), this protein is Ketol-acid reductoisomerase (NADP(+)).